Here is an 859-residue protein sequence, read N- to C-terminus: ATP-dependent DNA helicase PIF1 (859 aa).

A mitochondrion-targeting transit peptide spans 1 to 45 (MPKWIRSTLNHIIPRRPFICSFNSFLLLKNVSHAKLSFSMSSRGF). Phosphoserine is present on residues S70 and S72. Polar residues predominate over residues 142–157 (NSFDQSSQKKSRSTGF). The segment at 142 to 183 (NSFDQSSQKKSRSTGFKNPLRPALKKESSFDELQNSSISQER) is disordered. A Phosphoserine modification is found at S169. The segment covering 172–182 (DELQNSSISQE) has biased composition (polar residues). 258-265 (GSAGTGKS) provides a ligand contact to ATP. S584 carries the post-translational modification Phosphoserine. A DNA-binding region spans residues 727–746 (QAYVALSRAVSREGLQVLNF). A disordered region spans residues 782-859 (KRKLDYAPGP…GQDTEDHILE (78 aa)). Low complexity predominate over residues 800 to 809 (KSNSPAPISA). The segment covering 844–859 (VSDEPRGQDTEDHILE) has biased composition (basic and acidic residues).

It belongs to the helicase family. PIF1 subfamily. In terms of assembly, monomer in solution. DNA binding induces dimerization. Associates with mitochondrial and telomeric DNA. Binding to mtDNA is non-specific and the protein seems to coat the entire mtDNA molecule. Binds to the telomerase RNA TLC1. Interacts with the mitochondrial single-strand DNA-binding protein RIM1. Mg(2+) serves as cofactor. The cofactor is Mn(2+). Post-translationally, phosphorylated. Undergoes RAD53-dependent phosphorylation in response to loss of mtDNA.

Its subcellular location is the nucleus. The protein localises to the nucleolus. It is found in the mitochondrion inner membrane. The enzyme catalyses Couples ATP hydrolysis with the unwinding of duplex DNA at the replication fork by translocating in the 5'-3' direction. This creates two antiparallel DNA single strands (ssDNA). The leading ssDNA polymer is the template for DNA polymerase III holoenzyme which synthesizes a continuous strand.. It catalyses the reaction ATP + H2O = ADP + phosphate + H(+). Functionally, DNA-dependent ATPase and 5'-3' DNA helicase required for the maintenance of both mitochondrial and nuclear genome stability. Efficiently unwinds G-quadruplex (G4) DNA structures and forked RNA-DNA hybrids. Appears to move along DNA in single nucleotide or base pair steps, powered by hydrolysis of 1 molecule of ATP. Processes at an unwinding rate of about 75 bp/s. Resolves G4 structures, preventing replication pausing and double-strand breaks (DSBs) at G4 motifs. Involved in the maintenance of telomeric DNA. Inhibits telomere elongation, de novo telomere formation and telomere addition to DSBs via catalytic inhibition of telomerase. Reduces the processivity of telomerase by displacing active telomerase from DNA ends. Releases telomerase by unwinding the short telomerase RNA/telomeric DNA hybrid that is the intermediate in the telomerase reaction. Involved in the maintenance of ribosomal (rDNA). Required for efficient fork arrest at the replication fork barrier within rDNA. Involved in the maintenance of mitochondrial (mtDNA). Required to maintain mtDNA under conditions that introduce dsDNA breaks in mtDNA, either preventing or repairing dsDNA breaks. May inhibit replication progression to allow time for repair. May have a general role in chromosomal replication by affecting Okazaki fragment maturation. May have a role in conjunction with DNA2 helicase/nuclease in 5'-flap extension during Okazaki fragment processing. The sequence is that of ATP-dependent DNA helicase PIF1 from Saccharomyces cerevisiae (strain YJM789) (Baker's yeast).